Consider the following 21-residue polypeptide: Hemocyanin subunit 6 (21 aa).

Belongs to the tyrosinase family. Hemocyanin subfamily. Hemolymph.

It is found in the secreted. It localises to the extracellular space. In terms of biological role, hemocyanins are copper-containing oxygen carriers occurring freely dissolved in the hemolymph of many mollusks and arthropods. This chain is Hemocyanin subunit 6, found in Maja squinado (Mediterranean spider crab).